A 230-amino-acid chain; its full sequence is Urease accessory protein UreF (230 aa).

It belongs to the UreF family. UreD, UreF and UreG form a complex that acts as a GTP-hydrolysis-dependent molecular chaperone, activating the urease apoprotein by helping to assemble the nickel containing metallocenter of UreC. The UreE protein probably delivers the nickel.

The protein resides in the cytoplasm. Its function is as follows. Required for maturation of urease via the functional incorporation of the urease nickel metallocenter. The protein is Urease accessory protein UreF of Cupriavidus pinatubonensis (strain JMP 134 / LMG 1197) (Cupriavidus necator (strain JMP 134)).